Consider the following 107-residue polypeptide: Large ribosomal subunit protein uL24 (107 aa).

It belongs to the universal ribosomal protein uL24 family. As to quaternary structure, part of the 50S ribosomal subunit.

Its function is as follows. One of two assembly initiator proteins, it binds directly to the 5'-end of the 23S rRNA, where it nucleates assembly of the 50S subunit. Functionally, one of the proteins that surrounds the polypeptide exit tunnel on the outside of the subunit. This chain is Large ribosomal subunit protein uL24, found in Thermoanaerobacter pseudethanolicus (strain ATCC 33223 / 39E) (Clostridium thermohydrosulfuricum).